We begin with the raw amino-acid sequence, 586 residues long: Major facilitator superfamily domain-containing protein 6-like (586 aa).

2 consecutive transmembrane segments (helical) span residues 50–70 and 78–98; these read ILMG…AFLA and MFLT…VLVP. The interval 218 to 237 is disordered; sequence GPVNLSKPQGDTQTPDHSSK. A compositionally biased stretch (polar residues) spans 223-237; that stretch reads SKPQGDTQTPDHSSK. The next 9 membrane-spanning stretches (helical) occupy residues 240-260, 284-304, 318-338, 365-385, 397-417, 428-448, 454-474, 494-514, and 519-538; these read PWTF…AAPL, LWVW…ALVG, VIYF…STAF, LILL…VQDF, ELVM…FHPF, VGVL…YAFI, VLPV…AVGA, GHFY…VVLH, and VLYE…FLSI.

This sequence belongs to the major facilitator superfamily. MFSD6 family.

Its subcellular location is the membrane. This Mus musculus (Mouse) protein is Major facilitator superfamily domain-containing protein 6-like (Mfsd6l).